A 251-amino-acid polypeptide reads, in one-letter code: uncharacterized protein (251 aa).

The RING-type zinc-finger motif lies at 192 to 238 (CMMCVQRGDERVAITTPYTTDCGHTYCYACIMSRLKLVNNVSCPICK).

The protein resides in the cytoplasm. This is an uncharacterized protein from Schizosaccharomyces pombe (strain 972 / ATCC 24843) (Fission yeast).